A 101-amino-acid polypeptide reads, in one-letter code: Urease subunit beta (101 aa).

Belongs to the urease beta subunit family. Heterotrimer of UreA (gamma), UreB (beta) and UreC (alpha) subunits. Three heterotrimers associate to form the active enzyme.

The protein localises to the cytoplasm. The enzyme catalyses urea + 2 H2O + H(+) = hydrogencarbonate + 2 NH4(+). The protein operates within nitrogen metabolism; urea degradation; CO(2) and NH(3) from urea (urease route): step 1/1. The chain is Urease subunit beta from Cereibacter sphaeroides (strain ATCC 17029 / ATH 2.4.9) (Rhodobacter sphaeroides).